Here is a 512-residue protein sequence, read N- to C-terminus: Protein maph-9 (512 aa).

3 disordered regions span residues 24–103 (ISRK…DDDF), 168–386 (DLSE…KNEK), and 481–512 (GNRL…RPFR). Composition is skewed to low complexity over residues 30-39 (TTTTSSGSSG) and 78-95 (STLS…STAA). Over residues 178 to 200 (TDHEDPSLTFRVDKELEQSESKK) the composition is skewed to basic and acidic residues. Residues 230-239 (PQTSANLSTK) show a composition bias toward polar residues. Basic and acidic residues-rich tracts occupy residues 260–302 (KPSD…RENS) and 310–386 (VQDH…KNEK). The stretch at 267-429 (KEWLQKKERE…QLEESEKMTR (163 aa)) forms a coiled coil. A compositionally biased stretch (polar residues) spans 502–512 (PGTTTSLRPFR).

In terms of tissue distribution, expressed in amphid and phasmid ciliated neurons.

The protein resides in the cell projection. It localises to the cilium. The protein localises to the cytoplasm. It is found in the cytoskeleton. Its subcellular location is the cilium axoneme. This chain is Protein maph-9, found in Caenorhabditis elegans.